The sequence spans 34 residues: N(4)-(Beta-N-acetylglucosaminyl)-L-asparaginase (34 aa).

Residue Thr-18 is the Nucleophile of the active site.

This sequence belongs to the Ntn-hydrolase family. Heterotetramer of two alpha and two beta chains arranged as a dimer of alpha/beta heterodimers. In terms of processing, cleaved into an alpha and beta chain by autocatalysis; this activates the enzyme. The N-terminal residue of the beta subunit is responsible for the nucleophile hydrolase activity. Post-translationally, N-glycosylated.

Its subcellular location is the lysosome. The enzyme catalyses N(4)-(beta-N-acetyl-D-glucosaminyl)-L-asparagine + H2O = N-acetyl-beta-D-glucosaminylamine + L-aspartate + H(+). Cleaves the GlcNAc-Asn bond which joins oligosaccharides to the peptide of asparagine-linked glycoproteins. The protein is N(4)-(Beta-N-acetylglucosaminyl)-L-asparaginase (AGA) of Sus scrofa (Pig).